A 456-amino-acid polypeptide reads, in one-letter code: N(6)-adenosine-methyltransferase non-catalytic subunit METTL14 (456 aa).

Positions 50–75 (TCRASYDTSAPNAKRKYLDEGETDED) are disordered. Interaction with METTL3 stretches follow at residues 135-136 (RD) and 237-238 (SG). Positions 245–254 (RVCLRKWGYR) are positively charged region required for RNA-binding. Interaction with METTL3 regions lie at residues 255 to 258 (RCED) and 278 to 287 (KAVFQRTKEH). Residues 297–298 (KR) are positively charged region required for RNA-binding. The tract at residues 308 to 312 (NVDID) is interaction with METTL3. The interval 393–456 (ERLRPKSPPP…GAHRGGFPPR (64 aa)) is disordered. Ser399 carries the post-translational modification Phosphoserine. The segment covering 409–423 (GGGAPRGGGRGGTSA) has biased composition (gly residues). A compositionally biased stretch (basic and acidic residues) spans 425-440 (RGRERNRSNFRGERGG). Residues 441–450 (FRGGRGGAHR) show a composition bias toward gly residues.

This sequence belongs to the MT-A70-like family. In terms of assembly, heterodimer; heterodimerizes with METTL3 to form an antiparallel heterodimer that constitutes an active methyltransferase. Component of the WMM complex, a N6-methyltransferase complex composed of a catalytic subcomplex, named MAC, and of an associated subcomplex, named MACOM. The MAC subcomplex is composed of METTL3 and METTL14. The MACOM subcomplex is composed of WTAP, ZC3H13, CBLL1/HAKAI, VIRMA, and, in some cases of RBM15 (RBM15 or RBM15B).

It is found in the nucleus. The METTL3-METTL14 heterodimer forms a N6-methyltransferase complex that methylates adenosine residues at the N(6) position of some mRNAs and regulates the circadian clock, differentiation of embryonic stem cells and cortical neurogenesis. In the heterodimer formed with METTL3, METTL14 constitutes the RNA-binding scaffold that recognizes the substrate rather than the catalytic core. N6-methyladenosine (m6A), which takes place at the 5'-[AG]GAC-3' consensus sites of some mRNAs, plays a role in mRNA stability and processing. M6A acts as a key regulator of mRNA stability by promoting mRNA destabilization and degradation. In embryonic stem cells (ESCs), m6A methylation of mRNAs encoding key naive pluripotency-promoting transcripts results in transcript destabilization. M6A regulates spermatogonial differentiation and meiosis and is essential for male fertility and spermatogenesis. M6A also regulates cortical neurogenesis: m6A methylation of transcripts related to transcription factors, neural stem cells, the cell cycle and neuronal differentiation during brain development promotes their destabilization and decay, promoting differentiation of radial glial cells. The sequence is that of N(6)-adenosine-methyltransferase non-catalytic subunit METTL14 from Homo sapiens (Human).